Consider the following 308-residue polypeptide: Porphobilinogen deaminase (308 aa).

Cysteine 241 is subject to S-(dipyrrolylmethanemethyl)cysteine.

It belongs to the HMBS family. As to quaternary structure, monomer. It depends on dipyrromethane as a cofactor.

The enzyme catalyses 4 porphobilinogen + H2O = hydroxymethylbilane + 4 NH4(+). The protein operates within porphyrin-containing compound metabolism; protoporphyrin-IX biosynthesis; coproporphyrinogen-III from 5-aminolevulinate: step 2/4. Functionally, tetrapolymerization of the monopyrrole PBG into the hydroxymethylbilane pre-uroporphyrinogen in several discrete steps. The protein is Porphobilinogen deaminase of Exiguobacterium sibiricum (strain DSM 17290 / CCUG 55495 / CIP 109462 / JCM 13490 / 255-15).